The sequence spans 752 residues: MTISPPEREEKKARVIVDKDPVPTSFEKWAQPGHFDRTLARGPKTTTWIWNLHALAHDFDTHTSDLEDISRKIFAAHFGHLAVVTIWLSGMIFHGAKFSNYEAWLSDPLNVRPSAQVVWPIVGQDILNGDVGGGFHGIQITSGLFQVWRGWGITNSFQLYCTAIGGLVLAGLFLFAGWFHYHKRAPKLEWFQNVESMLNHHLQVLLGCGSLGWAGHLIHVSAPINKLMDAGVAVKDIPLPHEFILNKSLLIDLFPGFAAGLTPFFTLNWGQYADFLTFKGGLNPVTGGLWMTDIAHHHLAIAVVFIIAGHQYRTNWGIGHSIKEILENHKGPFTGEGHKGLYENLTTSWHAQLATNLAFLGSLTIIIAHHMYAMPPYPYLATDYATQLCIFTHHIWIGGFLIVGGAAHAAIFMVRDYDPVVNQNNVLDRVIRHRDAIISHLNWVCIFLGFHSFGLYIHNDTMRALGRPQDMFSDTAIQLQPVFAQWVQNLHTLAPGGTAPNALEPVSYAFGGGVLAVGGKVAMMPIALGTADFLIHHIHAFTIHVTVLILLKGVLFARSSRLIPDKANLGFRFPCDGPGRGGTCQVSGWDHVFLGLFWMYNSLSIVIFHFSWKMQSDVWGTVDAAGNVSHITGGNFAQSAITINGWLRDFLWAQASQVINSYGSALSAYGLMFLGAHFVWAFSLMFLFSGRGYWQELIESIVWAHNKLKVAPAIQPRALSITQGRAVGVAHYLLGGIATTWAFFHAHILSVG.

The next 8 membrane-spanning stretches (helical) occupy residues 73-96 (IFAA…FHGA), 159-182 (LYCT…FHYH), 198-222 (LNHH…HVSA), 294-312 (IAHH…GHQY), 349-372 (WHAQ…HHMY), 388-414 (LCIF…IFMV), 436-458 (AIIS…LYIH), and 533-551 (FLIH…LILL). Residues Cys575 and Cys584 each contribute to the [4Fe-4S] cluster site. Transmembrane regions (helical) follow at residues 591–612 (HVFL…HFSW) and 666–688 (LSAY…MFLF). His677 provides a ligand contact to chlorophyll a'. Met685 and Tyr693 together coordinate chlorophyll a. Trp694 contacts phylloquinone. Residues 726–746 (AVGVAHYLLGGIATTWAFFHA) form a helical membrane-spanning segment.

It belongs to the PsaA/PsaB family. In terms of assembly, the PsaA/B heterodimer binds the P700 chlorophyll special pair and subsequent electron acceptors. PSI consists of a core antenna complex that captures photons, and an electron transfer chain that converts photonic excitation into a charge separation. The cyanobacterial PSI reaction center is composed of one copy each of PsaA,B,C,D,E,F,I,J,K,L,M and X, and forms trimeric complexes. Requires PSI electron transfer chain: 5 chlorophyll a, 1 chlorophyll a', 2 phylloquinones and 3 4Fe-4S clusters. PSI core antenna: 90 chlorophyll a, 22 carotenoids, 3 phospholipids and 1 galactolipid. P700 is a chlorophyll a/chlorophyll a' dimer, A0 is one or more chlorophyll a, A1 is one or both phylloquinones and FX is a shared 4Fe-4S iron-sulfur center. as cofactor.

The protein resides in the cellular thylakoid membrane. The catalysed reaction is reduced [plastocyanin] + hnu + oxidized [2Fe-2S]-[ferredoxin] = oxidized [plastocyanin] + reduced [2Fe-2S]-[ferredoxin]. PsaA and PsaB bind P700, the primary electron donor of photosystem I (PSI), as well as the electron acceptors A0, A1 and FX. PSI is a plastocyanin/cytochrome c6-ferredoxin oxidoreductase, converting photonic excitation into a charge separation, which transfers an electron from the donor P700 chlorophyll pair to the spectroscopically characterized acceptors A0, A1, FX, FA and FB in turn. Oxidized P700 is reduced on the lumenal side of the thylakoid membrane by plastocyanin or cytochrome c6. This Nostoc sp. (strain PCC 7120 / SAG 25.82 / UTEX 2576) protein is Photosystem I P700 chlorophyll a apoprotein A1.